Consider the following 207-residue polypeptide: Large ribosomal subunit protein uL4 (207 aa).

The disordered stretch occupies residues 44-77 (RRQGTHDTKTRSEVRGGGRKPWRQKGTGRARHGT). Over residues 47-59 (GTHDTKTRSEVRG) the composition is skewed to basic and acidic residues. Residues 60–77 (GGRKPWRQKGTGRARHGT) show a composition bias toward basic residues.

The protein belongs to the universal ribosomal protein uL4 family. Part of the 50S ribosomal subunit.

In terms of biological role, one of the primary rRNA binding proteins, this protein initially binds near the 5'-end of the 23S rRNA. It is important during the early stages of 50S assembly. It makes multiple contacts with different domains of the 23S rRNA in the assembled 50S subunit and ribosome. Its function is as follows. Forms part of the polypeptide exit tunnel. This Desulforudis audaxviator (strain MP104C) protein is Large ribosomal subunit protein uL4.